Here is a 454-residue protein sequence, read N- to C-terminus: Septin-10 (454 aa).

Positions 63–329 (QGFCFNILCV…ELYRRCKLEE (267 aa)) constitute a Septin-type G domain. The interval 73–80 (GETGIGKS) is G1 motif. GTP is bound by residues 73–80 (GETGIGKS), Gly128, 209–217 (KADTVSKTE), Gly263, and Arg278. Residues 125 to 128 (NTVG) are G3 motif. The segment at 208–211 (AKAD) is G4 motif.

The protein belongs to the TRAFAC class TrmE-Era-EngA-EngB-Septin-like GTPase superfamily. Septin GTPase family. Septins polymerize into heterooligomeric protein complexes that form filaments, and can associate with cellular membranes, actin filaments and microtubules. GTPase activity is required for filament formation. Interacts with ADGB. Post-translationally, proteolytically cleaved in vitro in a calmodulin-dependent manner. Widely expressed. Abundantly expressed in heart and kidney, placenta, skeletal muscles, liver and lung, as well as various tumor cell lines.

The protein resides in the cytoplasm. Its subcellular location is the cytoskeleton. The protein localises to the cell projection. It is found in the cilium. It localises to the flagellum. In terms of biological role, filament-forming cytoskeletal GTPase. May play a role in cytokinesis (Potential). In Homo sapiens (Human), this protein is Septin-10.